The chain runs to 339 residues: Anthranilate phosphoribosyltransferase (339 aa).

Residues Gly81, 84 to 85 (GD), Thr89, 91 to 94 (NVST), 109 to 117 (KHGNRSVSS), and Ser121 each bind 5-phospho-alpha-D-ribose 1-diphosphate. Gly81 lines the anthranilate pocket. Residue Ser93 participates in Mg(2+) binding. Asn112 serves as a coordination point for anthranilate. Arg167 lines the anthranilate pocket. The Mg(2+) site is built by Asp226 and Glu227.

Belongs to the anthranilate phosphoribosyltransferase family. In terms of assembly, homodimer. Requires Mg(2+) as cofactor.

The catalysed reaction is N-(5-phospho-beta-D-ribosyl)anthranilate + diphosphate = 5-phospho-alpha-D-ribose 1-diphosphate + anthranilate. It functions in the pathway amino-acid biosynthesis; L-tryptophan biosynthesis; L-tryptophan from chorismate: step 2/5. In terms of biological role, catalyzes the transfer of the phosphoribosyl group of 5-phosphorylribose-1-pyrophosphate (PRPP) to anthranilate to yield N-(5'-phosphoribosyl)-anthranilate (PRA). The protein is Anthranilate phosphoribosyltransferase of Persephonella marina (strain DSM 14350 / EX-H1).